The following is a 332-amino-acid chain: Biotin synthase (332 aa).

Positions 51 to 279 (YKVQLASLLS…RSRVRLSAGR (229 aa)) constitute a Radical SAM core domain. The [4Fe-4S] cluster site is built by cysteine 66, cysteine 70, and cysteine 73. [2Fe-2S] cluster contacts are provided by cysteine 110, cysteine 142, cysteine 202, and arginine 274.

This sequence belongs to the radical SAM superfamily. Biotin synthase family. As to quaternary structure, homodimer. [4Fe-4S] cluster is required as a cofactor. Requires [2Fe-2S] cluster as cofactor.

The enzyme catalyses (4R,5S)-dethiobiotin + (sulfur carrier)-SH + 2 reduced [2Fe-2S]-[ferredoxin] + 2 S-adenosyl-L-methionine = (sulfur carrier)-H + biotin + 2 5'-deoxyadenosine + 2 L-methionine + 2 oxidized [2Fe-2S]-[ferredoxin]. It participates in cofactor biosynthesis; biotin biosynthesis; biotin from 7,8-diaminononanoate: step 2/2. In terms of biological role, catalyzes the conversion of dethiobiotin (DTB) to biotin by the insertion of a sulfur atom into dethiobiotin via a radical-based mechanism. This Prochlorococcus marinus (strain SARG / CCMP1375 / SS120) protein is Biotin synthase.